The primary structure comprises 91 residues: Cell division topological specificity factor (91 aa).

It belongs to the MinE family.

Functionally, prevents the cell division inhibition by proteins MinC and MinD at internal division sites while permitting inhibition at polar sites. This ensures cell division at the proper site by restricting the formation of a division septum at the midpoint of the long axis of the cell. This Thermoanaerobacter pseudethanolicus (strain ATCC 33223 / 39E) (Clostridium thermohydrosulfuricum) protein is Cell division topological specificity factor.